Reading from the N-terminus, the 172-residue chain is SsrA-binding protein (172 aa).

The protein belongs to the SmpB family.

Its subcellular location is the cytoplasm. Its function is as follows. Required for rescue of stalled ribosomes mediated by trans-translation. Binds to transfer-messenger RNA (tmRNA), required for stable association of tmRNA with ribosomes. tmRNA and SmpB together mimic tRNA shape, replacing the anticodon stem-loop with SmpB. tmRNA is encoded by the ssrA gene; the 2 termini fold to resemble tRNA(Ala) and it encodes a 'tag peptide', a short internal open reading frame. During trans-translation Ala-aminoacylated tmRNA acts like a tRNA, entering the A-site of stalled ribosomes, displacing the stalled mRNA. The ribosome then switches to translate the ORF on the tmRNA; the nascent peptide is terminated with the 'tag peptide' encoded by the tmRNA and targeted for degradation. The ribosome is freed to recommence translation, which seems to be the essential function of trans-translation. The polypeptide is SsrA-binding protein (Dehalococcoides mccartyi (strain ATCC BAA-2100 / JCM 16839 / KCTC 5957 / BAV1)).